A 490-amino-acid polypeptide reads, in one-letter code: JNK-interacting protein 1 (490 aa).

Disordered regions lie at residues 1–71 (MADS…DHEP) and 213–254 (EDSS…PVSQ). Residues 231–249 (GHSTAHSPNDFKSMSPQIT) are compositionally biased toward polar residues. One can recognise an SH3 domain in the interval 271 to 332 (MLEATHRGLH…PSAYAVDLDY (62 aa)). The 136-residue stretch at 344–479 (KERYLLGYLG…FQRFYQKFIE (136 aa)) folds into the PID domain.

This sequence belongs to the JIP scaffold family. As to quaternary structure, forms homo- and heterooligomeric complexes. Binds Hep, a dual specificity protein kinase in the JNK pathway, but not its downstream target bsk. The C-terminal region interacts with the kinesin light chain protein, Klc, and the C-terminal PTY motif of amyloid-beta protein precursor-like protein, Appl. As to expression, expressed in the brain, CNS, PNS and cells posterior to the morphogenetic furrow in the eye imaginal disk of late embryos.

It localises to the cytoplasm. Its function is as follows. The JNK-interacting protein (JIP) group of scaffold proteins selectively mediates JNK signaling by aggregating specific components of the MAPK cascade to form a functional JNK signaling module. May function as a regulator of vesicle transport, through interactions with the JNK-signaling components and motor proteins. The protein is JNK-interacting protein 1 (Aplip1) of Drosophila melanogaster (Fruit fly).